Reading from the N-terminus, the 335-residue chain is Phospho-N-acetylmuramoyl-pentapeptide-transferase (335 aa).

The next 9 membrane-spanning stretches (helical) occupy residues 2 to 22 (PPLF…LILV), 55 to 75 (IPTA…LLLL), 77 to 97 (CNLW…ALGW), 118 to 137 (FFIQ…IAYG), 153 to 173 (LPHC…AIVG), 193 to 213 (VIAC…WAFI), 238 to 258 (IFMG…CAVL), 263 to 283 (FMLL…ILQV), and 313 to 333 (VVRN…FAVF).

Belongs to the glycosyltransferase 4 family. MraY subfamily. It depends on Mg(2+) as a cofactor.

It localises to the cell inner membrane. It catalyses the reaction UDP-N-acetyl-alpha-D-muramoyl-L-alanyl-gamma-D-glutamyl-meso-2,6-diaminopimeloyl-D-alanyl-D-alanine + di-trans,octa-cis-undecaprenyl phosphate = di-trans,octa-cis-undecaprenyl diphospho-N-acetyl-alpha-D-muramoyl-L-alanyl-D-glutamyl-meso-2,6-diaminopimeloyl-D-alanyl-D-alanine + UMP. Its pathway is cell wall biogenesis; peptidoglycan biosynthesis. Its function is as follows. Catalyzes the initial step of the lipid cycle reactions in the biosynthesis of the cell wall peptidoglycan: transfers peptidoglycan precursor phospho-MurNAc-pentapeptide from UDP-MurNAc-pentapeptide onto the lipid carrier undecaprenyl phosphate, yielding undecaprenyl-pyrophosphoryl-MurNAc-pentapeptide, known as lipid I. The chain is Phospho-N-acetylmuramoyl-pentapeptide-transferase from Chlamydia muridarum (strain MoPn / Nigg).